The primary structure comprises 224 residues: Imidazoleglycerol-phosphate dehydratase (224 aa).

This sequence belongs to the imidazoleglycerol-phosphate dehydratase family.

The enzyme catalyses D-erythro-1-(imidazol-4-yl)glycerol 3-phosphate = 3-(imidazol-4-yl)-2-oxopropyl phosphate + H2O. Its pathway is amino-acid biosynthesis; L-histidine biosynthesis; L-histidine from 5-phospho-alpha-D-ribose 1-diphosphate: step 6/9. The chain is Imidazoleglycerol-phosphate dehydratase (HIS3) from Komagataella pastoris (Yeast).